We begin with the raw amino-acid sequence, 337 residues long: uncharacterized protein (337 aa).

The AFP-like domain maps to 279-337; that stretch reads SIVAKRNIKKGEYLSVDNISFKRPGRGIETKYLSIILNRKIKNDKEEDDIIYWDDLLGD.

To B.subtilis SpsE.

This is an uncharacterized protein from Methanocaldococcus jannaschii (strain ATCC 43067 / DSM 2661 / JAL-1 / JCM 10045 / NBRC 100440) (Methanococcus jannaschii).